We begin with the raw amino-acid sequence, 264 residues long: S-adenosylmethionine decarboxylase proenzyme (264 aa).

The active-site Schiff-base intermediate with substrate; via pyruvic acid is the Ser112. The residue at position 112 (Ser112) is a Pyruvic acid (Ser); by autocatalysis. The active-site Proton acceptor; for processing activity is His117. Residue Cys140 is the Proton donor; for catalytic activity of the active site.

It belongs to the prokaryotic AdoMetDC family. Type 2 subfamily. As to quaternary structure, heterooctamer of four alpha and four beta chains arranged as a tetramer of alpha/beta heterodimers. It depends on pyruvate as a cofactor. Post-translationally, is synthesized initially as an inactive proenzyme. Formation of the active enzyme involves a self-maturation process in which the active site pyruvoyl group is generated from an internal serine residue via an autocatalytic post-translational modification. Two non-identical subunits are generated from the proenzyme in this reaction, and the pyruvate is formed at the N-terminus of the alpha chain, which is derived from the carboxyl end of the proenzyme. The post-translation cleavage follows an unusual pathway, termed non-hydrolytic serinolysis, in which the side chain hydroxyl group of the serine supplies its oxygen atom to form the C-terminus of the beta chain, while the remainder of the serine residue undergoes an oxidative deamination to produce ammonia and the pyruvoyl group blocking the N-terminus of the alpha chain.

The catalysed reaction is S-adenosyl-L-methionine + H(+) = S-adenosyl 3-(methylsulfanyl)propylamine + CO2. Its pathway is amine and polyamine biosynthesis; S-adenosylmethioninamine biosynthesis; S-adenosylmethioninamine from S-adenosyl-L-methionine: step 1/1. Its function is as follows. Catalyzes the decarboxylation of S-adenosylmethionine to S-adenosylmethioninamine (dcAdoMet), the propylamine donor required for the synthesis of the polyamines spermine and spermidine from the diamine putrescine. This Shigella dysenteriae serotype 1 (strain Sd197) protein is S-adenosylmethionine decarboxylase proenzyme.